We begin with the raw amino-acid sequence, 730 residues long: Hemolytic phospholipase C (730 aa).

Residues 1 to 38 constitute a signal peptide (tat-type signal); the sequence is MTENWKFRRRTFLKHGAQAATLAGLSGLFPETLRRALA.

It belongs to the bacterial phospholipase C family. Predicted to be exported by the Tat system. The position of the signal peptide cleavage has not been experimentally proven.

It carries out the reaction a 1,2-diacyl-sn-glycero-3-phosphocholine + H2O = phosphocholine + a 1,2-diacyl-sn-glycerol + H(+). In terms of biological role, hydrolyzes sphingomyelin in addition to phosphatidylcholine. The polypeptide is Hemolytic phospholipase C (plcH) (Pseudomonas aeruginosa (strain ATCC 15692 / DSM 22644 / CIP 104116 / JCM 14847 / LMG 12228 / 1C / PRS 101 / PAO1)).